Here is a 260-residue protein sequence, read N- to C-terminus: Imidazole glycerol phosphate synthase subunit HisF (260 aa).

Residues Asp-12 and Asp-131 contribute to the active site.

Belongs to the HisA/HisF family. As to quaternary structure, heterodimer of HisH and HisF.

The protein resides in the cytoplasm. It carries out the reaction 5-[(5-phospho-1-deoxy-D-ribulos-1-ylimino)methylamino]-1-(5-phospho-beta-D-ribosyl)imidazole-4-carboxamide + L-glutamine = D-erythro-1-(imidazol-4-yl)glycerol 3-phosphate + 5-amino-1-(5-phospho-beta-D-ribosyl)imidazole-4-carboxamide + L-glutamate + H(+). The protein operates within amino-acid biosynthesis; L-histidine biosynthesis; L-histidine from 5-phospho-alpha-D-ribose 1-diphosphate: step 5/9. In terms of biological role, IGPS catalyzes the conversion of PRFAR and glutamine to IGP, AICAR and glutamate. The HisF subunit catalyzes the cyclization activity that produces IGP and AICAR from PRFAR using the ammonia provided by the HisH subunit. This chain is Imidazole glycerol phosphate synthase subunit HisF, found in Corynebacterium jeikeium (strain K411).